A 511-amino-acid polypeptide reads, in one-letter code: Bifunctional purine biosynthesis protein PurH (511 aa).

Residues 1–145 enclose the MGS-like domain; it reads MKKRALVSVS…KNHKFVSVIV (145 aa).

It belongs to the PurH family.

The enzyme catalyses (6R)-10-formyltetrahydrofolate + 5-amino-1-(5-phospho-beta-D-ribosyl)imidazole-4-carboxamide = 5-formamido-1-(5-phospho-D-ribosyl)imidazole-4-carboxamide + (6S)-5,6,7,8-tetrahydrofolate. It carries out the reaction IMP + H2O = 5-formamido-1-(5-phospho-D-ribosyl)imidazole-4-carboxamide. The protein operates within purine metabolism; IMP biosynthesis via de novo pathway; 5-formamido-1-(5-phospho-D-ribosyl)imidazole-4-carboxamide from 5-amino-1-(5-phospho-D-ribosyl)imidazole-4-carboxamide (10-formyl THF route): step 1/1. It functions in the pathway purine metabolism; IMP biosynthesis via de novo pathway; IMP from 5-formamido-1-(5-phospho-D-ribosyl)imidazole-4-carboxamide: step 1/1. This chain is Bifunctional purine biosynthesis protein PurH, found in Bacillus cereus (strain B4264).